We begin with the raw amino-acid sequence, 230 residues long: DNA mismatch repair protein MutH (230 aa).

It belongs to the MutH family.

It is found in the cytoplasm. Functionally, sequence-specific endonuclease that cleaves unmethylated GATC sequences. It is involved in DNA mismatch repair. The polypeptide is DNA mismatch repair protein MutH (Enterobacter sp. (strain 638)).